The chain runs to 93 residues: Muconolactone Delta-isomerase (93 aa).

It belongs to the muconolactone Delta-isomerase family. As to quaternary structure, homodecamer.

The catalysed reaction is (S)-muconolactone = (4,5-dihydro-5-oxofuran-2-yl)-acetate. It functions in the pathway aromatic compound metabolism; beta-ketoadipate pathway; 5-oxo-4,5-dihydro-2-furylacetate from catechol: step 3/3. This is Muconolactone Delta-isomerase (catC) from Rhodococcus opacus (Nocardia opaca).